A 347-amino-acid polypeptide reads, in one-letter code: Protein-glutamate methylesterase/protein-glutamine glutaminase (347 aa).

A Response regulatory domain is found at 6–123 (RVLVVDDSPT…HRPFGDLAEK (118 aa)). At D57 the chain carries 4-aspartylphosphate. Positions 150–342 (FRVGRKIVAI…EEILKLTAAR (193 aa)) constitute a CheB-type methylesterase domain. Catalysis depends on residues S162, H188, and D284.

It belongs to the CheB family. Post-translationally, phosphorylated by CheA. Phosphorylation of the N-terminal regulatory domain activates the methylesterase activity.

The protein resides in the cytoplasm. The enzyme catalyses [protein]-L-glutamate 5-O-methyl ester + H2O = L-glutamyl-[protein] + methanol + H(+). It carries out the reaction L-glutaminyl-[protein] + H2O = L-glutamyl-[protein] + NH4(+). Its function is as follows. Involved in chemotaxis. Part of a chemotaxis signal transduction system that modulates chemotaxis in response to various stimuli. Catalyzes the demethylation of specific methylglutamate residues introduced into the chemoreceptors (methyl-accepting chemotaxis proteins or MCP) by CheR. Also mediates the irreversible deamidation of specific glutamine residues to glutamic acid. This Rhizobium etli (strain ATCC 51251 / DSM 11541 / JCM 21823 / NBRC 15573 / CFN 42) protein is Protein-glutamate methylesterase/protein-glutamine glutaminase.